Here is an 88-residue protein sequence, read N- to C-terminus: Small ribosomal subunit protein bS20 (88 aa).

The interval 1–27 (MANSKSAKKRALQSEKRRQHNASRRSM) is disordered.

It belongs to the bacterial ribosomal protein bS20 family.

In terms of biological role, binds directly to 16S ribosomal RNA. The sequence is that of Small ribosomal subunit protein bS20 from Shewanella woodyi (strain ATCC 51908 / MS32).